Consider the following 315-residue polypeptide: Calumenin (315 aa).

Positions 1–19 (MDLRQFLMCLSLCTAFALS) are cleaved as a signal peptide. A Phosphoserine modification is found at serine 44. Tyrosine 47 carries the phosphotyrosine modification. Threonine 65 bears the Phosphothreonine mark. 6 consecutive EF-hand domains span residues 68–103 (ESKERLGKIVSKIDGDKDGFVTVDELKDWIKFAQKR), 104–139 (WIYEDVERQWKGHDLNEDGLVSWEEYKNATYGYVLD), 151–186 (QMMVRDERRFKMADKDGDLIATKEEFTAFLHPEEYD), 188–223 (MKDIVVQETMEDIDKNADGFIDLEEYIGDMYSHDGN), 229–264 (WVKTEREQFVEFRDKNRDGKMDKEETKDWILPSDYD), and 265–300 (HAEAEARHLVYESDQNKDGKLTKEEIVDKYDLFVGS). Serine 69 carries the post-translational modification Phosphoserine; by FAM20C. Ca(2+)-binding residues include aspartate 81, aspartate 83, aspartate 85, glutamate 92, aspartate 117, asparagine 119, aspartate 121, and glutamate 128. Asparagine 131 carries an N-linked (GlcNAc...) (complex) asparagine glycan. Aspartate 164 provides a ligand contact to Ca(2+). Lysine 165 is subject to N6-acetyllysine. Ca(2+)-binding residues include aspartate 166, aspartate 168, glutamate 175, aspartate 201, asparagine 203, aspartate 205, glutamate 212, aspartate 242, asparagine 244, aspartate 246, lysine 248, and glutamate 253. Threonine 254 carries the phosphothreonine modification. A phosphoserine mark is found at serine 261 and serine 277. Aspartate 278, asparagine 280, aspartate 282, lysine 284, and glutamate 289 together coordinate Ca(2+). Positions 312–315 (HDEF) match the Prevents secretion from ER motif.

Belongs to the CREC family. In terms of assembly, interacts with GGCX. Ubiquitously expressed. Expressed at high levels in heart, placenta and skeletal muscle, at lower levels in lung, kidney and pancreas and at very low levels in brain and liver.

Its subcellular location is the endoplasmic reticulum membrane. The protein resides in the golgi apparatus. It localises to the secreted. It is found in the melanosome. The protein localises to the sarcoplasmic reticulum lumen. Involved in regulation of vitamin K-dependent carboxylation of multiple N-terminal glutamate residues. Seems to inhibit gamma-carboxylase GGCX. Binds 7 calcium ions with a low affinity. The protein is Calumenin (CALU) of Homo sapiens (Human).